Reading from the N-terminus, the 253-residue chain is Imidazole glycerol phosphate synthase subunit HisF (253 aa).

Active-site residues include Asp-11 and Asp-130.

Belongs to the HisA/HisF family. As to quaternary structure, heterodimer of HisH and HisF.

Its subcellular location is the cytoplasm. The catalysed reaction is 5-[(5-phospho-1-deoxy-D-ribulos-1-ylimino)methylamino]-1-(5-phospho-beta-D-ribosyl)imidazole-4-carboxamide + L-glutamine = D-erythro-1-(imidazol-4-yl)glycerol 3-phosphate + 5-amino-1-(5-phospho-beta-D-ribosyl)imidazole-4-carboxamide + L-glutamate + H(+). The protein operates within amino-acid biosynthesis; L-histidine biosynthesis; L-histidine from 5-phospho-alpha-D-ribose 1-diphosphate: step 5/9. IGPS catalyzes the conversion of PRFAR and glutamine to IGP, AICAR and glutamate. The HisF subunit catalyzes the cyclization activity that produces IGP and AICAR from PRFAR using the ammonia provided by the HisH subunit. This Ruminiclostridium cellulolyticum (strain ATCC 35319 / DSM 5812 / JCM 6584 / H10) (Clostridium cellulolyticum) protein is Imidazole glycerol phosphate synthase subunit HisF.